The chain runs to 56 residues: Attractin (56 aa).

Intrachain disulfides connect cysteine 4/cysteine 41, cysteine 13/cysteine 33, and cysteine 20/cysteine 26.

In terms of tissue distribution, produced by the albumen gland of the egg cordons.

The protein resides in the secreted. Functionally, water-borne pheromone that attract the marine mollusk Aplysia into breeding aggregations and coordinate male and female reproductive behavior within the aggregation. The sequence is that of Attractin (ATT) from Aplysia vaccaria (California black sea hare).